The chain runs to 229 residues: Cytochrome c oxidase subunit 2 (229 aa).

Topologically, residues 1–26 (MATWMNINLQDANSSTMEQLTMFHDH) are mitochondrial intermembrane. Residues 27–48 (TLMILTMITSIVTFIMVSMTTN) traverse the membrane as a helical segment. The Mitochondrial matrix segment spans residues 49–62 (TLINRYLLEGQTIE). Residues 63-82 (FIWTTIPAITLIFIALPSLH) traverse the membrane as a helical segment. At 83-229 (LLYLIDEINN…LKWINKSLSS (147 aa)) the chain is on the mitochondrial intermembrane side. Cu cation contacts are provided by His-161, Cys-196, Glu-198, Cys-200, His-204, and Met-207. Residue Glu-198 coordinates Mg(2+).

This sequence belongs to the cytochrome c oxidase subunit 2 family. As to quaternary structure, component of the cytochrome c oxidase (complex IV, CIV), a multisubunit enzyme composed of a catalytic core of 3 subunits and several supernumerary subunits. The complex exists as a monomer or a dimer and forms supercomplexes (SCs) in the inner mitochondrial membrane with ubiquinol-cytochrome c oxidoreductase (cytochrome b-c1 complex, complex III, CIII). Requires Cu cation as cofactor.

It is found in the mitochondrion inner membrane. The catalysed reaction is 4 Fe(II)-[cytochrome c] + O2 + 8 H(+)(in) = 4 Fe(III)-[cytochrome c] + 2 H2O + 4 H(+)(out). Functionally, component of the cytochrome c oxidase, the last enzyme in the mitochondrial electron transport chain which drives oxidative phosphorylation. The respiratory chain contains 3 multisubunit complexes succinate dehydrogenase (complex II, CII), ubiquinol-cytochrome c oxidoreductase (cytochrome b-c1 complex, complex III, CIII) and cytochrome c oxidase (complex IV, CIV), that cooperate to transfer electrons derived from NADH and succinate to molecular oxygen, creating an electrochemical gradient over the inner membrane that drives transmembrane transport and the ATP synthase. Cytochrome c oxidase is the component of the respiratory chain that catalyzes the reduction of oxygen to water. Electrons originating from reduced cytochrome c in the intermembrane space (IMS) are transferred via the dinuclear copper A center (CU(A)) of subunit 2 and heme A of subunit 1 to the active site in subunit 1, a binuclear center (BNC) formed by heme A3 and copper B (CU(B)). The BNC reduces molecular oxygen to 2 water molecules using 4 electrons from cytochrome c in the IMS and 4 protons from the mitochondrial matrix. The sequence is that of Cytochrome c oxidase subunit 2 (COII) from Oncopeltus fasciatus (Large milkweed bug).